Here is a 160-residue protein sequence, read N- to C-terminus: Cell division protein SepF (160 aa).

Residues 18-30 show a composition bias toward acidic residues; sequence AEGEDDFEDDVDT. Positions 18–72 are disordered; the sequence is AEGEDDFEDDVDTGETSFDSDHSVTPMPSSSASASTPSAPREQSNPFQGGRVSRI. A compositionally biased stretch (low complexity) spans 45 to 57; that stretch reads PSSSASASTPSAP.

Belongs to the SepF family. Homodimer. Interacts with FtsZ.

Its subcellular location is the cytoplasm. Functionally, cell division protein that is part of the divisome complex and is recruited early to the Z-ring. Probably stimulates Z-ring formation, perhaps through the cross-linking of FtsZ protofilaments. Its function overlaps with FtsA. The protein is Cell division protein SepF of Bifidobacterium adolescentis (strain ATCC 15703 / DSM 20083 / NCTC 11814 / E194a).